The following is a 202-amino-acid chain: Na(+)-translocating NADH-quinone reductase subunit E (202 aa).

Transmembrane regions (helical) follow at residues 11–31 (SIFIENLALAFFLGMCTYLAV), 39–59 (MGLGVAVIVVMTITVPVNNLL), 79–99 (LTFVGLISYIGVIAAIVQILE), 114–134 (GIFLPLITVNCAILGASLFMV), 144–164 (VTFGFGSGVGWALAIVLLAGI), and 180–200 (LGITFIVVGLMSFGFLSFSGI).

This sequence belongs to the NqrDE/RnfAE family. As to quaternary structure, composed of six subunits; NqrA, NqrB, NqrC, NqrD, NqrE and NqrF.

The protein resides in the cell inner membrane. The enzyme catalyses a ubiquinone + n Na(+)(in) + NADH + H(+) = a ubiquinol + n Na(+)(out) + NAD(+). In terms of biological role, NQR complex catalyzes the reduction of ubiquinone-1 to ubiquinol by two successive reactions, coupled with the transport of Na(+) ions from the cytoplasm to the periplasm. NqrA to NqrE are probably involved in the second step, the conversion of ubisemiquinone to ubiquinol. This Maridesulfovibrio salexigens (strain ATCC 14822 / DSM 2638 / NCIMB 8403 / VKM B-1763) (Desulfovibrio salexigens) protein is Na(+)-translocating NADH-quinone reductase subunit E.